We begin with the raw amino-acid sequence, 118 residues long: UPF0102 protein Swit_0572 (118 aa).

The protein belongs to the UPF0102 family.

The polypeptide is UPF0102 protein Swit_0572 (Rhizorhabdus wittichii (strain DSM 6014 / CCUG 31198 / JCM 15750 / NBRC 105917 / EY 4224 / RW1) (Sphingomonas wittichii)).